The following is a 43-amino-acid chain: Protein PsbN (43 aa).

Residues 5–27 traverse the membrane as a helical segment; sequence TLVAIFISCLLVSFTGYAPYTAS.

Belongs to the PsbN family.

It is found in the plastid. The protein resides in the chloroplast thylakoid membrane. Its function is as follows. May play a role in photosystem I and II biogenesis. The protein is Protein PsbN of Anthoceros angustus (Hornwort).